The following is a 248-amino-acid chain: Ribosomal RNA small subunit methyltransferase J (248 aa).

S-adenosyl-L-methionine contacts are provided by residues 97-98 (RD), 113-114 (ER), and aspartate 167.

This sequence belongs to the methyltransferase superfamily. RsmJ family.

Its subcellular location is the cytoplasm. The catalysed reaction is guanosine(1516) in 16S rRNA + S-adenosyl-L-methionine = N(2)-methylguanosine(1516) in 16S rRNA + S-adenosyl-L-homocysteine + H(+). In terms of biological role, specifically methylates the guanosine in position 1516 of 16S rRNA. This Aeromonas hydrophila subsp. hydrophila (strain ATCC 7966 / DSM 30187 / BCRC 13018 / CCUG 14551 / JCM 1027 / KCTC 2358 / NCIMB 9240 / NCTC 8049) protein is Ribosomal RNA small subunit methyltransferase J.